The chain runs to 239 residues: Aspartate/glutamate leucyltransferase (239 aa).

This sequence belongs to the R-transferase family. Bpt subfamily.

The protein resides in the cytoplasm. The enzyme catalyses N-terminal L-glutamyl-[protein] + L-leucyl-tRNA(Leu) = N-terminal L-leucyl-L-glutamyl-[protein] + tRNA(Leu) + H(+). The catalysed reaction is N-terminal L-aspartyl-[protein] + L-leucyl-tRNA(Leu) = N-terminal L-leucyl-L-aspartyl-[protein] + tRNA(Leu) + H(+). Its function is as follows. Functions in the N-end rule pathway of protein degradation where it conjugates Leu from its aminoacyl-tRNA to the N-termini of proteins containing an N-terminal aspartate or glutamate. The polypeptide is Aspartate/glutamate leucyltransferase (Alkalilimnicola ehrlichii (strain ATCC BAA-1101 / DSM 17681 / MLHE-1)).